A 130-amino-acid chain; its full sequence is Small ribosomal subunit protein uS11 (130 aa).

It belongs to the universal ribosomal protein uS11 family. Part of the 30S ribosomal subunit. Interacts with proteins S7 and S18. Binds to IF-3.

Its function is as follows. Located on the platform of the 30S subunit, it bridges several disparate RNA helices of the 16S rRNA. Forms part of the Shine-Dalgarno cleft in the 70S ribosome. This is Small ribosomal subunit protein uS11 from Microcystis aeruginosa (strain NIES-843 / IAM M-2473).